The sequence spans 337 residues: Inner membrane protein YhjD (337 aa).

Residues 1-29 show a composition bias toward basic and acidic residues; the sequence is MTQENEIKRPIQDLEHEPIKPLDNSEKGS. The interval 1 to 31 is disordered; that stretch reads MTQENEIKRPIQDLEHEPIKPLDNSEKGSKV. Residues 1–74 are Cytoplasmic-facing; the sequence is MTQENEIKRP…LGNQFGAAIT (74 aa). Residues 75–97 form a helical membrane-spanning segment; sequence YFSFLSMIPILMVSFAAGGFVLA. Topologically, residues 98–133 are periplasmic; sequence SHPMLLQDIFDKILQNISDPTLAATLKNTINTAVQQ. The helical transmembrane segment at 134–156 threads the bilayer; it reads RTTVGLVGLAVALYSGINWMGNL. Residues 157 to 185 lie on the Cytoplasmic side of the membrane; the sequence is REAIRAQSRDVWERSPQDQEKFWVKYLRD. Residues 186–208 traverse the membrane as a helical segment; sequence FISLIGLLIALIVTLSITSVAGS. Residues 209–227 lie on the Periplasmic side of the membrane; the sequence is AQQMIISALHLNSIEWLKP. The chain crosses the membrane as a helical span at residues 228-250; that stretch reads TWRLIGLAISIFANYLLFFWIFW. The Cytoplasmic portion of the chain corresponds to 251–261; sequence RLPRHRPRKKA. Residues 262–284 traverse the membrane as a helical segment; that stretch reads LIRGTFLAAIGFEVIKIVMTYTL. Residues 285 to 298 lie on the Periplasmic side of the membrane; it reads PSLMKSPSGAAFGS. Residues 299-321 form a helical membrane-spanning segment; sequence VLGLMAFFYFFARLTLFCAAWIA. Topologically, residues 322–337 are cytoplasmic; sequence TAEYKDDPRMPGKTQP.

It is found in the cell inner membrane. This Escherichia coli (strain K12) protein is Inner membrane protein YhjD (yhjD).